A 509-amino-acid polypeptide reads, in one-letter code: Cytochrome P450 monooxygenase cpaH (509 aa).

N15 is a glycosylation site (N-linked (GlcNAc...) asparagine). The chain crosses the membrane as a helical span at residues 31-51 (TTILLIGVTYCILVGIYRVTL). Residues N306 and N412 are each glycosylated (N-linked (GlcNAc...) asparagine). C453 lines the heme pocket.

The protein belongs to the cytochrome P450 family. Requires heme as cofactor.

It is found in the membrane. Its pathway is secondary metabolite biosynthesis. Functionally, cytochrome P450 monooxygenase; part of the gene cluster that mediates the biosynthesis of the fungal neurotoxin cyclopiazonic acid (CPA), a nanomolar inhibitor of Ca(2+)-ATPase with a unique pentacyclic indole tetramic acid scaffold. The hybrid two module polyketide synthase-nonribosomal peptide synthetase (PKS-NRPS) cpaS incorporates acetyl-CoA, malonyl-CoA, and tryptophan (Trp) and utilizes a C-terminal redox-incompetent reductase domain to make and release the tryptophan tetramic acid, cyclo-acetoacetyl-L-tryptophan (c-AATrp), as the first intermediate in the pathway. CpaS catalyzes a Dieckmann-type cyclization on the N-acetoacetyl-Trp intermediate bound in thioester linkage to the phosphopantetheinyl arm of the T domain to form and release c-AATrp. CpaD then regiospecifically dimethylallylates c-AATrp to form beta-cyclopiazonic acid. CpaD discriminates against free Trp but accepts tryptophan-containing thiohydantoins, diketopiperazines, and linear peptides as substrates for C4-prenylation and also acts as a regiospecific O-dimethylallyltransferase (DMAT) on a tyrosine-derived tetramic acid. The beta-cyclopiazonate dehydrogenase cpaO then carries out the dehydrogenation of beta-CPA to yield an unstable enimine product, which is captured by intramolecular cyclization to create the pentacyclic fused scaffold of alpha-cyclopiazonate. Finally, the cytochrome P450 monooxygenase cpaH mediates the conversion of CPA into the less toxic 2-oxocyclopiazonic acid, the end product of the CPA pathway in A.oryza. This Aspergillus oryzae (Yellow koji mold) protein is Cytochrome P450 monooxygenase cpaH.